The sequence spans 351 residues: L-threonine 3-dehydrogenase (351 aa).

Cysteine 39 contacts Zn(2+). Residues threonine 41 and histidine 44 each act as charge relay system in the active site. Residues histidine 64, glutamate 65, cysteine 94, cysteine 97, cysteine 100, and cysteine 108 each coordinate Zn(2+). NAD(+) contacts are provided by residues isoleucine 176, aspartate 196, arginine 201, 271 to 273 (LGI), and 295 to 296 (IY).

Belongs to the zinc-containing alcohol dehydrogenase family. As to quaternary structure, homotetramer. Requires Zn(2+) as cofactor.

The protein resides in the cytoplasm. The catalysed reaction is L-threonine + NAD(+) = (2S)-2-amino-3-oxobutanoate + NADH + H(+). Its pathway is amino-acid degradation; L-threonine degradation via oxydo-reductase pathway; glycine from L-threonine: step 1/2. Its function is as follows. Catalyzes the NAD(+)-dependent oxidation of L-threonine to 2-amino-3-ketobutyrate. The polypeptide is L-threonine 3-dehydrogenase (Francisella tularensis subsp. novicida (strain U112)).